The primary structure comprises 201 residues: MCAARLAAAAAQSVYAFSARPLTGGEPVSLGSLRGKILLIENVASLUGTTVRDYTQMNELQRRLGPRGLVVLGFPCNQFGHQENAKNEEILNSLKYVRPGGGFEPNFMLFEKCEVNGAGAHPLFAFLREALPAPSDDATALMTDPKLITWSPVCRNDVAWNFEKFLVGPDGVPLRRYSRRFQTIDIEPDIEALLSQGPSCA.

Residue serine 32 is modified to Phosphoserine. Selenocysteine 47 is an active-site residue. Selenocysteine 47 is a non-standard amino acid (selenocysteine). Residues lysine 86, lysine 112, and lysine 146 each carry the N6-acetyllysine; alternate modification. N6-succinyllysine; alternate is present on residues lysine 86, lysine 112, and lysine 146. Residues serine 195 and serine 199 each carry the phosphoserine modification.

This sequence belongs to the glutathione peroxidase family. In terms of assembly, homotetramer. Interacts with MIEN1. Post-translationally, during periods of oxidative stress, Sec-47 may react with a superoxide radical, irreversibly lose hydroselenide and be converted to dehydroalanine.

It localises to the cytoplasm. It catalyses the reaction 2 glutathione + H2O2 = glutathione disulfide + 2 H2O. It carries out the reaction (12S)-hydroperoxy-(5Z,8Z,10E,14Z)-eicosatetraenoate + 2 glutathione = (12S)-hydroxy-(5Z,8Z,10E,14Z)-eicosatetraenoate + glutathione disulfide + H2O. Functionally, protects the hemoglobin in erythrocytes from oxidative breakdown. In platelets, plays a crucial role of glutathione peroxidase in the arachidonic acid metabolism. This Hylobates lar (Lar gibbon) protein is Glutathione peroxidase 1 (GPX1).